A 409-amino-acid chain; its full sequence is Elongation factor Tu (409 aa).

The tr-type G domain occupies lysine 10–glutamate 214. A G1 region spans residues glycine 19–threonine 26. Residue glycine 19 to threonine 26 participates in GTP binding. Threonine 26 is a Mg(2+) binding site. Residues glycine 60–asparagine 64 are G2. The segment at aspartate 81–glycine 84 is G3. Residues aspartate 81–histidine 85 and asparagine 136–aspartate 139 each bind GTP. Residues asparagine 136–aspartate 139 are G4. The G5 stretch occupies residues serine 174–leucine 176.

The protein belongs to the TRAFAC class translation factor GTPase superfamily. Classic translation factor GTPase family. EF-Tu/EF-1A subfamily. As to quaternary structure, monomer.

Its subcellular location is the cytoplasm. It carries out the reaction GTP + H2O = GDP + phosphate + H(+). GTP hydrolase that promotes the GTP-dependent binding of aminoacyl-tRNA to the A-site of ribosomes during protein biosynthesis. The polypeptide is Elongation factor Tu (Acaryochloris marina (strain MBIC 11017)).